Reading from the N-terminus, the 68-residue chain is UPF0435 protein SA1696 (68 aa).

This sequence belongs to the UPF0435 family.

The protein is UPF0435 protein SA1696 of Staphylococcus aureus (strain N315).